The following is a 1181-amino-acid chain: WD repeat-containing protein 35 (1181 aa).

5 WD repeats span residues 12 to 51 (PNNV…DDSK), 69 to 108 (GHSG…WYEE), 113 to 152 (RNKS…IWGK), 154 to 193 (LKGI…IMKM), and 502 to 539 (GTRD…LIQK).

As to quaternary structure, component of the IFT complex A (IFT-A) complex. IFT-A complex is divided into a core subcomplex composed of IFT122:IFT140:WDR19 which is associated with TULP3 and a peripheral subcomplex composed of IFT43:WDR35:TTC21B. Interacts directy with IFT122, ITF43 and TTC21B. Interacts with IFT43. Interacts with CFAP61.

The protein resides in the cytoplasm. Its subcellular location is the cytoskeleton. It localises to the microtubule organizing center. It is found in the centrosome. The protein localises to the cilium axoneme. The protein resides in the cilium basal body. Its function is as follows. As a component of the IFT complex A (IFT-A), a complex required for retrograde ciliary transport and entry into cilia of G protein-coupled receptors (GPCRs), it is involved in ciliogenesis and ciliary protein trafficking. May promote CASP3 activation and TNF-stimulated apoptosis. In Mus musculus (Mouse), this protein is WD repeat-containing protein 35.